A 299-amino-acid chain; its full sequence is Prohibitin-2 (299 aa).

Position 2 is an N-acetylalanine (Ala-2). The interval Met-19–Ala-49 is necessary for transcriptional repression. Position 128 is a phosphotyrosine (Tyr-128). Lys-147 is modified (N6-acetyllysine). The tract at residues Ala-150–Asp-174 is necessary for transcriptional repression. Ser-151 carries the phosphoserine modification. A coiled-coil region spans residues Ser-190–Leu-238. An N6-acetyllysine mark is found at Lys-200, Lys-236, Lys-250, and Lys-262.

The protein belongs to the prohibitin family. The mitochondrial prohibitin complex consists of two subunits (PHB1 and PHB2), assembled into a membrane-associated ring-shaped supercomplex of approximately 1 mDa. Interacts with ESR1, HDAC1 and HDAC5. Interacts with ZNF703. Interacts with STOML2. Interacts with ARFGEF3. Interacts with SPHK2. Interacts with COX4I1; the interaction associates PHB2 with COX. Interacts with MAP1LC3B (membrane-bound form LC3-II); the interaction is direct and upon mitochondrial depolarization and proteasome-dependent outer membrane rupture. Interacts with IGFBP6 (via C-terminal domain). Interacts with CLPB. Interacts with CD86 (via cytoplasmic domain); the interactions increases after priming with CD40. Interacts with AFG3L2. Interacts with DNAJC19. Interacts with AKT2; this interaction may be important for myogenic differentiation. Phosphorylated. Tyrosine phosphorylation is indirectly stimulated by IGFBP6.

The protein localises to the mitochondrion inner membrane. The protein resides in the cytoplasm. It localises to the nucleus. It is found in the cell membrane. In terms of biological role, protein with pleiotropic attributes mediated in a cell-compartment- and tissue-specific manner, which include the plasma membrane-associated cell signaling functions, mitochondrial chaperone, and transcriptional co-regulator of transcription factors and sex steroid hormones in the nucleus. Functionally, in the mitochondria, together with PHB, forms large ring complexes (prohibitin complexes) in the inner mitochondrial membrane (IMM) and functions as a chaperone protein that stabilizes mitochondrial respiratory enzymes and maintains mitochondrial integrity in the IMM, which is required for mitochondrial morphogenesis, neuronal survival, and normal lifespan. The prohibitin complex, with DNAJC19, regulates cardiolipin remodeling and the protein turnover of OMA1 in a cardiolipin-binding manner. Also regulates cytochrome-c oxidase assembly (COX) and mitochondrial respiration. Binding to sphingoid 1-phosphate (SPP) modulates its regulator activity. Has a key role of mitophagy receptor involved in targeting mitochondria for autophagic degradation. Involved in mitochondrial-mediated antiviral innate immunity, activates RIG-I-mediated signal transduction and production of IFNB1 and pro-inflammatory cytokine IL6. In the nucleus, serves as transcriptional co-regulator. Acts as a mediator of transcriptional repression by nuclear hormone receptors via recruitment of histone deacetylases. Functions as an estrogen receptor (ER)-selective coregulator that potentiates the inhibitory activities of antiestrogens and represses the activity of estrogens. Competes with NCOA1 for modulation of ER transcriptional activity. Its function is as follows. In the plasma membrane, is involved in IGFBP6-induced cell migration. Cooperates with CD86 to mediate CD86-signaling in B lymphocytes that regulates the level of IgG1 produced through the activation of distal signaling intermediates. Upon CD40 engagement, required to activate NF-kappa-B signaling pathway via phospholipase C and protein kinase C activation. The chain is Prohibitin-2 from Rattus norvegicus (Rat).